The sequence spans 598 residues: NADPH-dependent diflavin oxidoreductase 1 (598 aa).

Residues 6–150 (LLVLFGSQTG…AIDPWVGDLW (145 aa)) enclose the Flavodoxin-like domain. FMN is bound by residues 12–17 (SQTGTA), 59–62 (ATTG), 97–106 (LGDSSYAKFN), and Asp-132. The region spanning 206-448 (LQPFLAPVIT…VRPGSLVFPK (243 aa)) is the FAD-binding FR-type domain. FAD contacts are provided by residues Arg-350, 382–385 (RAFS), and 416–419 (GLCS). NADP(+) is bound by residues Thr-461, 516–517 (SR), 522–526 (KVYVQ), and Asp-559. Trp-597 is a binding site for FAD.

This sequence belongs to the NADPH-dependent diflavin oxidoreductase NDOR1 family. In the N-terminal section; belongs to the flavodoxin family. It in the C-terminal section; belongs to the flavoprotein pyridine nucleotide cytochrome reductase family. Interacts with CIAPIN1; as part of the cytosolic iron-sulfur (Fe-S) protein assembly (CIA) machinery. Interacts with DCPS. Requires FAD as cofactor. FMN is required as a cofactor.

The protein resides in the cytoplasm. It localises to the perinuclear region. The catalysed reaction is 2 oxidized [2Fe-2S]-[protein] + NADPH = 2 reduced [2Fe-2S]-[protein] + NADP(+) + H(+). NADPH-dependent reductase which is a central component of the cytosolic iron-sulfur (Fe-S) protein assembly (CIA) machinery. Transfers electrons from NADPH via its FAD and FMN prosthetic groups to the [2Fe-2S] cluster of CIAPIN1, another key component of the CIA machinery. In turn, this reduced cluster provides electrons for assembly of cytosolic iron-sulfur cluster proteins. It can also reduce the [2Fe-2S] cluster of CISD1 and activate this protein implicated in Fe/S cluster repair. In vitro can fully activate methionine synthase/MTR in the presence of soluble cytochrome b5/CYB5A. In Mus musculus (Mouse), this protein is NADPH-dependent diflavin oxidoreductase 1.